We begin with the raw amino-acid sequence, 1579 residues long: MSHSDYFNYKPYGDSTEKPSSSKMRQSSSSSSSRLRSESLGRNSNTTQARVASSPISPGLHSTQYFRSPNAVYSPGESPLNTVQLFNRLPGIPQGQFFHQNAISGSSSSSARSSRRPSNIGLPLPKNPQQSLPKLSTQPVPVHKKVEASKTESEIIKKPAPVNSNQDPLLTTPTLVISPELASLNTTNTSIMSTPQNITNQTSNKHIPTRSQPNGSTSSSTLQDIVTTNSSQRSVGHHGGSTTSLRTYKKQYVLNEQLYLRKMRNRANDDYYTRGIVASSNFEDDEENFSNKGEDDLELEMDDLLKVEGEDKDNDFNFGYNFITSSTKNNENVVSMSLNYLKGKLDWLRDVNNDQPCEIEDEEWHSILGSEDLLSKLLQNPMVNNRFEWQTMLSKVLKGDIVRNEKTKIANQGKGPGFNTQFSDDIWIELKAWMNGRTVEDQNKSLRIFRDSTDSVFQEIMAFKLEDNMSADEAAETIKSLVDKYYRVLNLWPNIKRMHAEKPITKTEAFRNRIDTLNSWLNFKFNFDTNIAYLKKWIVGNKELESTTEVDNTTVNLDDPAVFATNCKRFAEQIMKEKDIELIFQKKIFFPLAPWILKAKFFFLKYQKTWNELNLSYLDQDLEFLLMFPMRLVKDIILIRLSYAKKIQNPTLMMIDQMMDDFSTYIKLAVQMKFTVASYCNDWFFKVKIDPEFDHTVVEGLEYFFSILELRILYSGKNSFKTSKEPDLLLKYWEMFRNVGYYIDDAGELIAAEFTKLTLRLVHRLHAYLLRQQNTPPKLENEAAAEKWLVQIFEILGSMKRKLNRFTNILTKAFQNFVRYKIEDHNYLLKQLKETGHFLIYTGGYLEQNGTYLIGSPELLGCKDDDILRIIKNSDIGCDLVPKLEINNSLTIYNALDDNWNSNSSLGSDISNDGTPFYYIKNDLTTQPRSYNGNRVNREPDFENSRSTEEEFYELETRLNSLGYVLVLTPQEPLLWEGEMYNLSDNKTIKPEGLNLKVIPNSIDLMCQGSSYALEYQCDRFQQISGSSVSFLEKKSSSETVKNNLQRINKAYFRCTYSVLKNYTKIVTTFKKVSPVNDLLNNIFLFGRDFGLNFLRINVANNEKRSIIILLMMRLSIGWLKFLAEDCDPTDQRVFRWCVTSMEFAMHMVSGWNILALDECQFSSLKQKISECMSLLISHFDIIGARSIEVEKINQQARSNLDLEDVFDDDMMLQVNSEFRVQSIMELEERIKRNPHQTGKVIDDSDKGNKYLVSLASSISNVSMRWQKRNFIGGGTFGRVYSAVDLDNGEILAVKEINIQDSKSMQKIFPLIKEEMSVLEILNHPNIVSYYGVEVHRDKVNIFMEYCEGGSLAALLEHGRIEDEMVTQVYTLQLLEGLAYLHESGIVHRDVKPENILLDFNGVIKYVDFGAAKKIANNGTRLASMNKIENADGEHEDVTHVSDSKAVKNNENALLDMMGTPMYMAPESITGSTTKGKLGADDVWSLGCVVLEMITGRRPWANLDNEWAIMYHVAAGHTPQFPTKDEVSSAGMKFLERCLIQNPSKRASAVELLMDPWIVQIREIAFGDDSSSTDTEERE.

The tract at residues Met-1–Asn-70 is disordered. The span at Ser-21–Ser-44 shows a compositional bias: low complexity. Polar residues predominate over residues Asn-45–Arg-67. Phosphoserine occurs at positions 57, 62, 78, and 118. 2 disordered regions span residues Phe-97–Ile-155 and Ser-190–Thr-243. Positions Ser-104 to Ser-118 are enriched in low complexity. Residues Asn-127–Pro-139 are compositionally biased toward polar residues. Positions Lys-144–Ile-155 are enriched in basic and acidic residues. Ser-290 bears the Phosphoserine mark. Positions Trp-1266–Ile-1558 constitute a Protein kinase domain. Residues Ile-1272–Val-1280 and Lys-1295 contribute to the ATP site. The active-site Proton acceptor is Asp-1390. Ser-1424 is subject to Phosphoserine.

It belongs to the protein kinase superfamily. STE Ser/Thr protein kinase family. MAP kinase kinase kinase subfamily. As to quaternary structure, interacts with by SSK1.

The catalysed reaction is L-seryl-[protein] + ATP = O-phospho-L-seryl-[protein] + ADP + H(+). It catalyses the reaction L-threonyl-[protein] + ATP = O-phospho-L-threonyl-[protein] + ADP + H(+). Functionally, kinase involved in a signal transduction pathway that is activated by changes in the osmolarity of the extracellular environment. Activates the PBS2 MAP kinase kinase by phosphorylation. This chain is MAP kinase kinase kinase SSK2 (SSK2), found in Saccharomyces cerevisiae (strain ATCC 204508 / S288c) (Baker's yeast).